Here is a 305-residue protein sequence, read N- to C-terminus: UDP-N-acetylenolpyruvoylglucosamine reductase (305 aa).

In terms of domain architecture, FAD-binding PCMH-type spans 37–202 (GIGGPARFLA…LSVTFNLEPK (166 aa)). The active site involves Arg183.

The protein belongs to the MurB family. FAD is required as a cofactor.

It is found in the cytoplasm. It catalyses the reaction UDP-N-acetyl-alpha-D-muramate + NADP(+) = UDP-N-acetyl-3-O-(1-carboxyvinyl)-alpha-D-glucosamine + NADPH + H(+). The protein operates within cell wall biogenesis; peptidoglycan biosynthesis. In terms of biological role, cell wall formation. The polypeptide is UDP-N-acetylenolpyruvoylglucosamine reductase (Rhodopirellula baltica (strain DSM 10527 / NCIMB 13988 / SH1)).